The following is a 124-amino-acid chain: Small ribosomal subunit protein uS11 (124 aa).

The protein belongs to the universal ribosomal protein uS11 family. Part of the 30S ribosomal subunit.

In terms of biological role, located on the platform of the 30S subunit. The protein is Small ribosomal subunit protein uS11 of Methanococcus aeolicus (strain ATCC BAA-1280 / DSM 17508 / OCM 812 / Nankai-3).